A 1005-amino-acid chain; its full sequence is DNA-directed RNA polymerase subunit beta (1005 aa).

This sequence belongs to the RNA polymerase beta chain family. In plastids the minimal PEP RNA polymerase catalytic core is composed of four subunits: alpha, beta, beta', and beta''. When a (nuclear-encoded) sigma factor is associated with the core the holoenzyme is formed, which can initiate transcription (Potential).

The protein localises to the plastid. It localises to the apicoplast. The catalysed reaction is RNA(n) + a ribonucleoside 5'-triphosphate = RNA(n+1) + diphosphate. Its function is as follows. DNA-dependent RNA polymerase catalyzes the transcription of DNA into RNA using the four ribonucleoside triphosphates as substrates. This Theileria parva (East coast fever infection agent) protein is DNA-directed RNA polymerase subunit beta (rpoB).